A 294-amino-acid polypeptide reads, in one-letter code: Histone deacetylase HDT3 (294 aa).

Met-1 bears the N-acetylmethionine mark. The segment at 2-5 (EFWG) is required to repress transcription. Residues 124 to 269 (QVNFQLPNED…TPKSAGAFGC (146 aa)) are disordered. Over residues 140–188 (DDADGSEEDSSDDDDSENSGDEEEEKVTAESDSEEDDSSDDEEDDSSEE) the composition is skewed to acidic residues. The span at 189–202 (ETPKKPEEPKKRSA) shows a compositional bias: basic and acidic residues. Residues 203–213 (EPNSSKNPASN) show a composition bias toward low complexity. Polar residues predominate over residues 252–262 (GETSKQQQTPK). The C2H2-type zinc-finger motif lies at 267–290 (FGCKSCTRTFTSEMGLQSHTKAKH).

This sequence belongs to the histone deacetylase HD2 family. As to quaternary structure, interacts with DNMT2. As to expression, expressed in leaves, roots, stems, young plantlets, flowers and siliques. Highest levels in ovules, embryos, shoot apical meristems and first leaves. Also expressed in somatic embryos.

It localises to the nucleus. It is found in the nucleolus. Probably mediates the deacetylation of lysine residues on the N-terminal part of the core histones (H2A, H2B, H3 and H4). Histone deacetylation gives a tag for epigenetic repression and plays an important role in transcriptional regulation, cell cycle progression and developmental events. Involved in the modulation of abscisic acid and stress-responsive genes. In Arabidopsis thaliana (Mouse-ear cress), this protein is Histone deacetylase HDT3 (HDT3).